The chain runs to 269 residues: 3-methyl-2-oxobutanoate hydroxymethyltransferase (269 aa).

Residues Asp43 and Asp82 each coordinate Mg(2+). 3-methyl-2-oxobutanoate is bound by residues 43 to 44 (DS), Asp82, and Lys110. Glu112 is a binding site for Mg(2+). Glu179 serves as the catalytic Proton acceptor.

This sequence belongs to the PanB family. Homodecamer; pentamer of dimers. Requires Mg(2+) as cofactor.

The protein localises to the cytoplasm. The catalysed reaction is 3-methyl-2-oxobutanoate + (6R)-5,10-methylene-5,6,7,8-tetrahydrofolate + H2O = 2-dehydropantoate + (6S)-5,6,7,8-tetrahydrofolate. It functions in the pathway cofactor biosynthesis; (R)-pantothenate biosynthesis; (R)-pantoate from 3-methyl-2-oxobutanoate: step 1/2. In terms of biological role, catalyzes the reversible reaction in which hydroxymethyl group from 5,10-methylenetetrahydrofolate is transferred onto alpha-ketoisovalerate to form ketopantoate. The polypeptide is 3-methyl-2-oxobutanoate hydroxymethyltransferase (Acinetobacter baumannii (strain AB307-0294)).